The primary structure comprises 302 residues: Sulfate adenylyltransferase subunit 2 (302 aa).

The tract at residues 280–302 (RQGRLIDSDQSASMEQKKRQGYF) is disordered.

This sequence belongs to the PAPS reductase family. CysD subfamily. In terms of assembly, heterodimer composed of CysD, the smaller subunit, and CysN.

It carries out the reaction sulfate + ATP + H(+) = adenosine 5'-phosphosulfate + diphosphate. It participates in sulfur metabolism; hydrogen sulfide biosynthesis; sulfite from sulfate: step 1/3. In terms of biological role, with CysN forms the ATP sulfurylase (ATPS) that catalyzes the adenylation of sulfate producing adenosine 5'-phosphosulfate (APS) and diphosphate, the first enzymatic step in sulfur assimilation pathway. APS synthesis involves the formation of a high-energy phosphoric-sulfuric acid anhydride bond driven by GTP hydrolysis by CysN coupled to ATP hydrolysis by CysD. The chain is Sulfate adenylyltransferase subunit 2 from Shewanella frigidimarina (strain NCIMB 400).